Here is a 354-residue protein sequence, read N- to C-terminus: uncharacterized protein (354 aa).

Disordered stretches follow at residues 1–74 and 87–115; these read MGTK…ENCR and SESG…QRAS. Lys-19 carries the N6-acetyllysine modification. Residues 32 to 41 are compositionally biased toward low complexity; it reads EGPSSNSSFH. The segment covering 45–54 has biased composition (acidic residues); it reads EEGTDLEGDM. Phosphoserine is present on residues Ser-115 and Ser-174. Over residues 182-199 the composition is skewed to polar residues; sequence QGSSQDLPMQANLSQSNE. Disordered stretches follow at residues 182–208 and 235–298; these read QGSS…GRDR and QVAD…DELS. The residue at position 291 (Tyr-291) is a Phosphotyrosine. Residue Ser-292 is modified to Phosphoserine.

This is an uncharacterized protein from Mus musculus (Mouse).